Reading from the N-terminus, the 354-residue chain is MKETIKNMAAYEAELPVAEVKATYGVSHVARLSANESPYGPSPKVGPAIRDVSDDVLGFYPDGQATALRQAVAKLEQVNPDSLVFGAGADELIELLTRVILTPNDNVIVPNPTFGEYAMHAQIEQATTKSIPVNQDTGHVDFDAMFDAVDEHTTMVWLANPNNPTGVFETRSDILSFLQKLPQSVVLVVDEAYYDFVDQIDATVIRDVKDYPNLVVLRTLSKAYGLANLRIGYGVMQEPLYQVMQAVRLPYNLNTYQITGAVAALSDQLYLQSVVAKVKSEREKFEQFLTKHQFKYYQSQTNFLWIKVGDAKRVGEALLSEGYQINDRLNAEWIRIALGTVSDNEGMQRILLNF.

Residue Lys-222 is modified to N6-(pyridoxal phosphate)lysine.

Belongs to the class-II pyridoxal-phosphate-dependent aminotransferase family. Histidinol-phosphate aminotransferase subfamily. Homodimer. Pyridoxal 5'-phosphate serves as cofactor.

It carries out the reaction L-histidinol phosphate + 2-oxoglutarate = 3-(imidazol-4-yl)-2-oxopropyl phosphate + L-glutamate. The protein operates within amino-acid biosynthesis; L-histidine biosynthesis; L-histidine from 5-phospho-alpha-D-ribose 1-diphosphate: step 7/9. This Leuconostoc citreum (strain KM20) protein is Histidinol-phosphate aminotransferase.